Reading from the N-terminus, the 211-residue chain is Large ribosomal subunit protein uL4 (211 aa).

Positions glutamine 41–lysine 52 are enriched in polar residues. The disordered stretch occupies residues glutamine 41–isoleucine 78. Positions glycine 60 to glycine 71 are enriched in basic residues.

It belongs to the universal ribosomal protein uL4 family. In terms of assembly, part of the 50S ribosomal subunit.

Its function is as follows. One of the primary rRNA binding proteins, this protein initially binds near the 5'-end of the 23S rRNA. It is important during the early stages of 50S assembly. It makes multiple contacts with different domains of the 23S rRNA in the assembled 50S subunit and ribosome. Forms part of the polypeptide exit tunnel. The protein is Large ribosomal subunit protein uL4 of Rippkaea orientalis (strain PCC 8801 / RF-1) (Cyanothece sp. (strain PCC 8801)).